The chain runs to 248 residues: DNA repair protein RecO (248 aa).

The protein belongs to the RecO family.

Involved in DNA repair and RecF pathway recombination. The sequence is that of DNA repair protein RecO from Bacillus cereus (strain B4264).